The chain runs to 132 residues: uncharacterized protein (132 aa).

The interval methionine 1–threonine 34 is disordered.

It to M.tuberculosis Rv2656c.

This is an uncharacterized protein from Mycobacterium tuberculosis (strain CDC 1551 / Oshkosh).